The following is a 215-amino-acid chain: Probable nicotinate-nucleotide adenylyltransferase (215 aa).

The protein belongs to the NadD family.

The enzyme catalyses nicotinate beta-D-ribonucleotide + ATP + H(+) = deamido-NAD(+) + diphosphate. It participates in cofactor biosynthesis; NAD(+) biosynthesis; deamido-NAD(+) from nicotinate D-ribonucleotide: step 1/1. Its function is as follows. Catalyzes the reversible adenylation of nicotinate mononucleotide (NaMN) to nicotinic acid adenine dinucleotide (NaAD). This is Probable nicotinate-nucleotide adenylyltransferase from Shewanella putrefaciens (strain CN-32 / ATCC BAA-453).